The following is a 141-amino-acid chain: Large ribosomal subunit protein uL11 (141 aa).

The protein belongs to the universal ribosomal protein uL11 family. As to quaternary structure, part of the ribosomal stalk of the 50S ribosomal subunit. Interacts with L10 and the large rRNA to form the base of the stalk. L10 forms an elongated spine to which L12 dimers bind in a sequential fashion forming a multimeric L10(L12)X complex. One or more lysine residues are methylated.

Its function is as follows. Forms part of the ribosomal stalk which helps the ribosome interact with GTP-bound translation factors. This Synechocystis sp. (strain ATCC 27184 / PCC 6803 / Kazusa) protein is Large ribosomal subunit protein uL11.